We begin with the raw amino-acid sequence, 237 residues long: Probable aquaporin SIP2-1 (237 aa).

Helical transmembrane passes span 15–35 (FMWIWAGVLVNILVHGVLGFS), 39–59 (PSGEIVRYLFSIISMFIFAYL), 71–91 (LTALAAGVSGGFSSFIFSVFV), 122–142 (VAIHHGALTEGILTFFIVLLS), 169–189 (ILGSDLTGGCMNPAAVMGWAY), and 202–222 (VYWLGPVKATLLAVWFFKVVF). The NPA 1 signature appears at 69–71 (NPL). Positions 180–182 (NPA) match the NPA 2 motif.

Belongs to the MIP/aquaporin (TC 1.A.8) family. SIP (TC 1.A.8.10) subfamily. As to expression, expressed in dividing cells and elongating regions of the root tips, emerging lateral roots, root steles, cotyledons, main veins of the rosette leaves, vascular tissues of the flower petals, stigma, stamens (anthers and filaments), pollen and the top and bottom (receptacle) of siliques.

The protein resides in the endoplasmic reticulum membrane. Functionally, water channel required to facilitate the transport of water across cell membrane. Inactive in yeast cells. The polypeptide is Probable aquaporin SIP2-1 (SIP2-1) (Arabidopsis thaliana (Mouse-ear cress)).